The following is a 147-amino-acid chain: Large ribosomal subunit protein uL15 (147 aa).

The segment at 1 to 54 (MKLFELQPAPGSKKLPNRKGRGIGSGNGKTGGRGHKGQNARAGGGVRPGFEGGQ) is disordered. Gly residues-rich tracts occupy residues 22-31 (GIGSGNGKTG) and 42-52 (AGGGVRPGFEG).

This sequence belongs to the universal ribosomal protein uL15 family. Part of the 50S ribosomal subunit.

Its function is as follows. Binds to the 23S rRNA. The chain is Large ribosomal subunit protein uL15 from Ruminiclostridium cellulolyticum (strain ATCC 35319 / DSM 5812 / JCM 6584 / H10) (Clostridium cellulolyticum).